Here is a 250-residue protein sequence, read N- to C-terminus: 5-oxoprolinase subunit A (250 aa).

The protein belongs to the LamB/PxpA family. In terms of assembly, forms a complex composed of PxpA, PxpB and PxpC.

The enzyme catalyses 5-oxo-L-proline + ATP + 2 H2O = L-glutamate + ADP + phosphate + H(+). Catalyzes the cleavage of 5-oxoproline to form L-glutamate coupled to the hydrolysis of ATP to ADP and inorganic phosphate. This is 5-oxoprolinase subunit A from Staphylococcus haemolyticus (strain JCSC1435).